The following is a 151-amino-acid chain: Ribosome maturation factor RimP (151 aa).

It belongs to the RimP family.

It localises to the cytoplasm. Required for maturation of 30S ribosomal subunits. The chain is Ribosome maturation factor RimP from Photobacterium profundum (strain SS9).